Here is a 205-residue protein sequence, read N- to C-terminus: LexA repressor (205 aa).

The segment at residues 28 to 48 (RAEIAASLGFRSPNAAEEHLK) is a DNA-binding region (H-T-H motif). Catalysis depends on for autocatalytic cleavage activity residues serine 122 and lysine 159.

This sequence belongs to the peptidase S24 family. In terms of assembly, homodimer.

It carries out the reaction Hydrolysis of Ala-|-Gly bond in repressor LexA.. Its function is as follows. Represses a number of genes involved in the response to DNA damage (SOS response), including recA and lexA. Binds to the 16 bp palindromic sequence 5'-CTGTATATATATACAG-3'. In the presence of single-stranded DNA, RecA interacts with LexA causing an autocatalytic cleavage which disrupts the DNA-binding part of LexA, leading to derepression of the SOS regulon and eventually DNA repair. The chain is LexA repressor from Providencia rettgeri.